The sequence spans 124 residues: UPF0102 protein Msil_0293 (124 aa).

Belongs to the UPF0102 family.

The sequence is that of UPF0102 protein Msil_0293 from Methylocella silvestris (strain DSM 15510 / CIP 108128 / LMG 27833 / NCIMB 13906 / BL2).